A 346-amino-acid chain; its full sequence is Methylthioribose-1-phosphate isomerase 1 (346 aa).

Substrate-binding positions include 48 to 50, arginine 91, and glutamine 196; that span reads RGA. Aspartate 237 functions as the Proton donor in the catalytic mechanism. 247 to 248 contributes to the substrate binding site; that stretch reads NK.

The protein belongs to the eIF-2B alpha/beta/delta subunits family. MtnA subfamily.

It catalyses the reaction 5-(methylsulfanyl)-alpha-D-ribose 1-phosphate = 5-(methylsulfanyl)-D-ribulose 1-phosphate. Its pathway is amino-acid biosynthesis; L-methionine biosynthesis via salvage pathway; L-methionine from S-methyl-5-thio-alpha-D-ribose 1-phosphate: step 1/6. Functionally, catalyzes the interconversion of methylthioribose-1-phosphate (MTR-1-P) into methylthioribulose-1-phosphate (MTRu-1-P). This chain is Methylthioribose-1-phosphate isomerase 1, found in Pseudothermotoga lettingae (strain ATCC BAA-301 / DSM 14385 / NBRC 107922 / TMO) (Thermotoga lettingae).